Here is a 79-residue protein sequence, read N- to C-terminus: Acyl carrier protein (79 aa).

The 76-residue stretch at 2–77 (SEIADKVKKI…DAIDYIEKQK (76 aa)) folds into the Carrier domain. Serine 37 is subject to O-(pantetheine 4'-phosphoryl)serine.

The protein belongs to the acyl carrier protein (ACP) family. In terms of processing, 4'-phosphopantetheine is transferred from CoA to a specific serine of apo-ACP by AcpS. This modification is essential for activity because fatty acids are bound in thioester linkage to the sulfhydryl of the prosthetic group.

It is found in the cytoplasm. The protein operates within lipid metabolism; fatty acid biosynthesis. Carrier of the growing fatty acid chain in fatty acid biosynthesis. The sequence is that of Acyl carrier protein from Gluconacetobacter diazotrophicus (strain ATCC 49037 / DSM 5601 / CCUG 37298 / CIP 103539 / LMG 7603 / PAl5).